Reading from the N-terminus, the 289-residue chain is Protein shisa-2 homolog (289 aa).

The signal sequence occupies residues 1–27; the sequence is MWAGCHPDAASLLRLLLAALLAAGALA. At 28–104 the chain is on the extracellular side; sequence SGEYCHGWLD…RADKDGPDGS (77 aa). The disordered stretch occupies residues 81–102; that stretch reads GCDNDRQQGAGEPGRADKDGPD. A helical membrane pass occupies residues 105–125; the sequence is AVPIYVPFLIVGSVFVAFIVL. The Cytoplasmic segment spans residues 126 to 289; sequence GSLVAACCCR…EQKMYPAVTV (164 aa). Residues 162–198 are disordered; that stretch reads PSASTSRGSSSRQSSTAASSSSSANSGARAPPTRSQT. A compositionally biased stretch (low complexity) spans 163 to 191; it reads SASTSRGSSSRQSSTAASSSSSANSGARA.

It belongs to the shisa family.

It is found in the endoplasmic reticulum membrane. Functionally, plays an essential role in the maturation of presomitic mesoderm cells by individual attenuation of both FGF and WNT signaling. The polypeptide is Protein shisa-2 homolog (SHISA2) (Bos taurus (Bovine)).